A 441-amino-acid chain; its full sequence is D-aminoacyl-tRNA deacylase (441 aa).

It belongs to the DtdA deacylase family. Monomer. It depends on Zn(2+) as a cofactor.

It catalyses the reaction a D-aminoacyl-tRNA + H2O = a tRNA + a D-alpha-amino acid + H(+). The enzyme catalyses glycyl-tRNA(Ala) + H2O = tRNA(Ala) + glycine + H(+). Functionally, D-aminoacyl-tRNA deacylase with broad substrate specificity. By recycling D-aminoacyl-tRNA to D-amino acids and free tRNA molecules, this enzyme counteracts the toxicity associated with the formation of D-aminoacyl-tRNA entities in vivo. This chain is D-aminoacyl-tRNA deacylase, found in Natronomonas pharaonis (strain ATCC 35678 / DSM 2160 / CIP 103997 / JCM 8858 / NBRC 14720 / NCIMB 2260 / Gabara) (Halobacterium pharaonis).